Here is a 314-residue protein sequence, read N- to C-terminus: tRNA dimethylallyltransferase 2 (314 aa).

8–15 is a binding site for ATP; it reads GPTGSGKS. 10-15 lines the substrate pocket; the sequence is TGSGKS.

This sequence belongs to the IPP transferase family. In terms of assembly, monomer. Mg(2+) is required as a cofactor.

It catalyses the reaction adenosine(37) in tRNA + dimethylallyl diphosphate = N(6)-dimethylallyladenosine(37) in tRNA + diphosphate. Catalyzes the transfer of a dimethylallyl group onto the adenine at position 37 in tRNAs that read codons beginning with uridine, leading to the formation of N6-(dimethylallyl)adenosine (i(6)A). The polypeptide is tRNA dimethylallyltransferase 2 (Mycobacterium marinum (strain ATCC BAA-535 / M)).